The primary structure comprises 366 residues: Type 2A phosphatase-associated protein 42 (366 aa).

The tract at residues arginine 318–glycine 366 is disordered. Acidic residues predominate over residues glutamate 324–aspartate 336. Residues tryptophan 337 to alanine 356 are compositionally biased toward basic and acidic residues.

Belongs to the IGBP1/TAP42 family. As to quaternary structure, associates with the PP2a (PPH21 and PPH22) and SIT4 protein phosphatase catalytic subunits. Interacts with PPG1, PPH3 and TIP41. In terms of processing, phosphorylated by TOR kinases. Dephosphorylated by CDC55, TPD3 and SIT4.

Its function is as follows. Involved in negative regulation of the TOR signaling pathway in response to type of available nitrogen source. Inhibitor of PP2A phosphatase SIT4, which results in inhibition of nuclear export of MSN2, due to lack of dephosphorylation by SIT4. Also required for rapamycin induced activation of expression of many nitrogen discrimination pathway (NDP) genes. In complex with PPH21, required for organization of the actin cytoskeletom during the cell cycle via a Rho GTPase-dependent mechanism. The chain is Type 2A phosphatase-associated protein 42 (TAP42) from Saccharomyces cerevisiae (strain ATCC 204508 / S288c) (Baker's yeast).